Reading from the N-terminus, the 168-residue chain is Outer-membrane lipoprotein YfiB (168 aa).

Positions 1-25 are cleaved as a signal peptide; it reads MLPQRLHPSRLLALALFSLVLGLAG. Residue C26 is the site of N-palmitoyl cysteine attachment. C26 carries the S-diacylglycerol cysteine lipid modification. Residues 53-168 form the OmpA-like domain; sequence EGWEFGMSSK…RRVAIIVPAE (116 aa).

It belongs to the outer membrane OOP (TC 1.B.6) superfamily. As to quaternary structure, homodimer. Interacts with YfiR. The YfiB-YfiR complex is a 2:2 heterotetramer.

Its subcellular location is the cell outer membrane. With respect to regulation, both lipid anchor in the outer membrane and peptidoglycan binding are required for full activity. Once activated by certain cell stress, the dimeric YfiB transforms from a compact conformation to a stretched conformation, allowing the periplasmic domain of the membrane-anchored YfiB to penetrate the cell wall and sequester the YfiR dimer. GMP enhances the binding affinity between YfiB and YfiR. Activates the diguanylate cyclase TpbB/YfiN by sequestering YfiR at the outer membrane, which counteracts the YfiR-mediated repression of TpbB/YfiN at the inner membrane and leads to increased c-di-GMP production. May act as a sensor of envelope stress. In terms of biological role, part of the YfiB-TpbB-YfiR (or yfiBNR) system, encoding a tripartite signaling module that modulates intracellular c-di-GMP levels. The system is a key regulator of the small colony variant (SCV) phenotype, and plays an important role in biofilm formation and in vivo persistence. The c-di-GMP produced by TpbB/YfiN stimulates the production of the Pel and Psl exopolysaccharides, which promotes surface attachment, generates an SCV phenotype and confers resistance against phagocytosis. This chain is Outer-membrane lipoprotein YfiB, found in Pseudomonas aeruginosa (strain ATCC 15692 / DSM 22644 / CIP 104116 / JCM 14847 / LMG 12228 / 1C / PRS 101 / PAO1).